We begin with the raw amino-acid sequence, 231 residues long: 2-amino-5-formylamino-6-ribosylaminopyrimidin-4(3H)-one 5'-monophosphate deformylase (231 aa).

Fe cation-binding residues include E29, H31, D40, and H110.

The protein belongs to the creatininase superfamily. FAPy deformylase family. In terms of assembly, homodimer. The cofactor is Fe(2+). It depends on Zn(2+) as a cofactor.

The catalysed reaction is 2-amino-5-formylamino-6-(5-phospho-D-ribosylamino)pyrimidin-4(3H)-one + H2O = 2,5-diamino-6-(1-D-ribosylamino)pyrimidin-4(3H)-one 5'-phosphate + formate + H(+). It participates in cofactor biosynthesis; coenzyme F420 biosynthesis. It functions in the pathway cofactor biosynthesis; riboflavin biosynthesis. Catalyzes the hydrolysis of the formamide of 2-amino-5-formylamino-6-ribosylamino-4(3H)-pyrimidinone 5'-monophosphate (FAPy) to form 2,5-diamino-6-ribosylamino-4(3H)-pyrimidinone 5'-phosphate (APy). This Methanothermobacter marburgensis (strain ATCC BAA-927 / DSM 2133 / JCM 14651 / NBRC 100331 / OCM 82 / Marburg) (Methanobacterium thermoautotrophicum) protein is 2-amino-5-formylamino-6-ribosylaminopyrimidin-4(3H)-one 5'-monophosphate deformylase.